The following is a 556-amino-acid chain: Protein misato homolog 1 (556 aa).

Position 41 is a phosphoserine (Ser41).

It belongs to the misato family.

It is found in the mitochondrion outer membrane. Its subcellular location is the cytoplasm. Involved in the regulation of mitochondrial distribution and morphology. Required for mitochondrial fusion and mitochondrial network formation. The chain is Protein misato homolog 1 (Msto1) from Mus musculus (Mouse).